The primary structure comprises 212 residues: Putative 3-methyladenine DNA glycosylase (212 aa).

This sequence belongs to the DNA glycosylase MPG family.

The sequence is that of Putative 3-methyladenine DNA glycosylase from Nocardia farcinica (strain IFM 10152).